Here is a 127-residue protein sequence, read N- to C-terminus: UPF0102 protein Mmwyl1_2395 (127 aa).

It belongs to the UPF0102 family.

The sequence is that of UPF0102 protein Mmwyl1_2395 from Marinomonas sp. (strain MWYL1).